Reading from the N-terminus, the 111-residue chain is C-type lectin lectoxin-Enh1 (111 aa).

Positions 1 to 23 (MGQFTVVSLGLLAMFLSLSGAKG) are cleaved as a signal peptide. C26 and C37 are disulfide-bonded. Residues 33-108 (RNGVCNKLFP…CASLHPFICQ (76 aa)) enclose the C-type lectin domain. The Mannose-binding motif lies at 72–74 (EPN). The Ca(2+) site is built by E80, N95, and D96. C82 and C99 are disulfide-bonded.

The protein belongs to the true venom lectin family. As to expression, expressed by the venom gland.

The protein localises to the secreted. In terms of biological role, mannose-binding lectin which recognizes specific carbohydrate structures and agglutinates a variety of animal cells by binding to cell-surface glycoproteins and glycolipids. May be a calcium-dependent lectin. The polypeptide is C-type lectin lectoxin-Enh1 (Pseudoferania polylepis (Macleay's water snake)).